The chain runs to 1017 residues: Integrator complex subunit 3 (1017 aa).

Residues 952–1017 (EYEDSSKPPK…KGSAVGSDSD (66 aa)) are disordered. Residues 983 to 997 (NEEESVSSSASEEED) show a composition bias toward acidic residues.

The protein belongs to the Integrator subunit 3 family. Component of the Integrator complex, composed of core subunits INTS1, INTS2, INTS3, INTS4, INTS5, INTS6, INTS7, INTS8, INTS9/RC74, INTS10, INTS11/CPSF3L, INTS12, INTS13, INTS14 and INTS15. The core complex associates with protein phosphatase 2A subunits PPP2CA and PPP2R1A, to form the Integrator-PP2A (INTAC) complex. Component of the SOSS complex.

It is found in the nucleus. The protein resides in the cytoplasm. Its function is as follows. Component of the integrator complex, a multiprotein complex that terminates RNA polymerase II (Pol II) transcription in the promoter-proximal region of genes. The integrator complex provides a quality checkpoint during transcription elongation by driving premature transcription termination of transcripts that are unfavorably configured for transcriptional elongation: the complex terminates transcription by (1) catalyzing dephosphorylation of the C-terminal domain (CTD) of Pol II subunit POLR2A/RPB1 and SUPT5H/SPT5, (2) degrading the exiting nascent RNA transcript via endonuclease activity and (3) promoting the release of Pol II from bound DNA. The integrator complex is also involved in terminating the synthesis of non-coding Pol II transcripts, such as enhancer RNAs (eRNAs), small nuclear RNAs (snRNAs), telomerase RNAs and long non-coding RNAs (lncRNAs). Within the integrator complex, INTS3 is involved in the post-termination step: INTS3 binds INTS7 in the open conformation of integrator complex and prevents the rebinding of Pol II to the integrator after termination cycle. Functionally, component of the SOSS complex, a multiprotein complex that functions downstream of the MRN complex to promote DNA repair and G2/M checkpoint. The SOSS complex associates with single-stranded DNA at DNA lesions and influences diverse endpoints in the cellular DNA damage response including cell-cycle checkpoint activation, recombinational repair and maintenance of genomic stability. The SOSS complex is required for efficient homologous recombination-dependent repair of double-strand breaks (DSBs) and ATM-dependent signaling pathways. In the SOSS complex, it is required for the assembly of the complex and for stabilization of the complex at DNA damage sites. The polypeptide is Integrator complex subunit 3 (ints3) (Danio rerio (Zebrafish)).